Reading from the N-terminus, the 337-residue chain is tRNA N6-adenosine threonylcarbamoyltransferase (337 aa).

Residues His-111 and His-115 each coordinate Fe cation. Substrate-binding positions include 134-138, Asp-167, Gly-180, and Asn-272; that span reads LVSGG. Asp-300 is a Fe cation binding site.

It belongs to the KAE1 / TsaD family. Fe(2+) serves as cofactor.

It is found in the cytoplasm. The catalysed reaction is L-threonylcarbamoyladenylate + adenosine(37) in tRNA = N(6)-L-threonylcarbamoyladenosine(37) in tRNA + AMP + H(+). Required for the formation of a threonylcarbamoyl group on adenosine at position 37 (t(6)A37) in tRNAs that read codons beginning with adenine. Is involved in the transfer of the threonylcarbamoyl moiety of threonylcarbamoyl-AMP (TC-AMP) to the N6 group of A37, together with TsaE and TsaB. TsaD likely plays a direct catalytic role in this reaction. This chain is tRNA N6-adenosine threonylcarbamoyltransferase, found in Escherichia coli (strain K12 / MC4100 / BW2952).